A 462-amino-acid chain; its full sequence is Phosphoglucosamine mutase (462 aa).

Residue Ser111 is the Phosphoserine intermediate of the active site. Positions 111, 250, 252, and 254 each coordinate Mg(2+). Residue Ser111 is modified to Phosphoserine.

It belongs to the phosphohexose mutase family. It depends on Mg(2+) as a cofactor. In terms of processing, activated by phosphorylation.

It carries out the reaction alpha-D-glucosamine 1-phosphate = D-glucosamine 6-phosphate. In terms of biological role, catalyzes the conversion of glucosamine-6-phosphate to glucosamine-1-phosphate. The sequence is that of Phosphoglucosamine mutase from Synechococcus sp. (strain WH7803).